Reading from the N-terminus, the 156-residue chain is ATP synthase subunit b (156 aa).

A helical transmembrane segment spans residues 3 to 23 (ITFTIFAQSLAFAALIWIVAT).

It belongs to the ATPase B chain family. As to quaternary structure, F-type ATPases have 2 components, F(1) - the catalytic core - and F(0) - the membrane proton channel. F(1) has five subunits: alpha(3), beta(3), gamma(1), delta(1), epsilon(1). F(0) has three main subunits: a(1), b(2) and c(10-14). The alpha and beta chains form an alternating ring which encloses part of the gamma chain. F(1) is attached to F(0) by a central stalk formed by the gamma and epsilon chains, while a peripheral stalk is formed by the delta and b chains.

Its subcellular location is the cell inner membrane. F(1)F(0) ATP synthase produces ATP from ADP in the presence of a proton or sodium gradient. F-type ATPases consist of two structural domains, F(1) containing the extramembraneous catalytic core and F(0) containing the membrane proton channel, linked together by a central stalk and a peripheral stalk. During catalysis, ATP synthesis in the catalytic domain of F(1) is coupled via a rotary mechanism of the central stalk subunits to proton translocation. Functionally, component of the F(0) channel, it forms part of the peripheral stalk, linking F(1) to F(0). This Xylella fastidiosa (strain M23) protein is ATP synthase subunit b.